A 249-amino-acid polypeptide reads, in one-letter code: Ribonuclease HII (249 aa).

Over residues 1 to 19 the composition is skewed to pro residues; it reads MAPRPKAPPQPAEPDPALP. The interval 1-31 is disordered; that stretch reads MAPRPKAPPQPAEPDPALPRPRGRPPKAGAV. In terms of domain architecture, RNase H type-2 spans 52–240; sequence APVAGADEVG…VREQQLGLFP (189 aa). A divalent metal cation is bound by residues aspartate 58, glutamate 59, and aspartate 149.

This sequence belongs to the RNase HII family. Mn(2+) serves as cofactor. It depends on Mg(2+) as a cofactor.

It localises to the cytoplasm. It catalyses the reaction Endonucleolytic cleavage to 5'-phosphomonoester.. In terms of biological role, endonuclease that specifically degrades the RNA of RNA-DNA hybrids. This chain is Ribonuclease HII, found in Xanthobacter autotrophicus (strain ATCC BAA-1158 / Py2).